Here is a 242-residue protein sequence, read N- to C-terminus: Spiralin (242 aa).

The N-terminal stretch at 1–23 (MKKLLSILAVFGVSAVGTTSVVA) is a signal peptide. C24 carries the N-palmitoyl cysteine lipid modification. C24 carries S-diacylglycerol cysteine lipidation.

This sequence belongs to the spiralin family. Seems to occur as dimer, tetramers, and large oligomers of identical chains. In terms of processing, palmitate and stearate are the major lipid components.

It is found in the cell membrane. Functionally, major membrane protein of spiroplasma. The protein is Spiralin (spi) of Spiroplasma melliferum.